We begin with the raw amino-acid sequence, 238 residues long: Small ribosomal subunit protein uS2c (238 aa).

The protein belongs to the universal ribosomal protein uS2 family.

It localises to the plastid. It is found in the chloroplast. This chain is Small ribosomal subunit protein uS2c (rps2), found in Oltmannsiellopsis viridis (Marine flagellate).